Consider the following 485-residue polypeptide: Eukaryotic translation initiation factor 3 subunit E (485 aa).

The region spanning 219 to 391 (NQPDGPDGIV…GEIHITKPVT (173 aa)) is the PCI domain. The disordered stretch occupies residues 444–485 (QGGGKSNKKGDYKKGDYKKGGDFKKGGDFKKGGDHKKRAWVK). Residues 451 to 475 (KKGDYKKGDYKKGGDFKKGGDFKKG) show a composition bias toward basic and acidic residues. Residues 476–485 (GDHKKRAWVK) are compositionally biased toward basic residues.

The protein belongs to the eIF-3 subunit E family. In terms of assembly, component of the eukaryotic translation initiation factor 3 (eIF-3) complex.

Its subcellular location is the cytoplasm. Its function is as follows. Component of the eukaryotic translation initiation factor 3 (eIF-3) complex, which is involved in protein synthesis of a specialized repertoire of mRNAs and, together with other initiation factors, stimulates binding of mRNA and methionyl-tRNAi to the 40S ribosome. The eIF-3 complex specifically targets and initiates translation of a subset of mRNAs involved in cell proliferation. This chain is Eukaryotic translation initiation factor 3 subunit E, found in Monosiga brevicollis (Choanoflagellate).